A 207-amino-acid polypeptide reads, in one-letter code: Protein MK0488 (207 aa).

The AMMECR1 domain maps to 8–200; sequence EEGEFLVRLA…EEEPEGPVRE (193 aa).

This is Protein MK0488 from Methanopyrus kandleri (strain AV19 / DSM 6324 / JCM 9639 / NBRC 100938).